Consider the following 146-residue polypeptide: Phospholipase A2 (146 aa).

The N-terminal stretch at 1-18 is a signal peptide; sequence MAFLVFAFLTLMAVETYG. 7 disulfide bridges follow: cysteine 44/cysteine 137, cysteine 46/cysteine 62, cysteine 61/cysteine 117, cysteine 67/cysteine 144, cysteine 68/cysteine 110, cysteine 77/cysteine 103, and cysteine 95/cysteine 108. 3 residues coordinate Ca(2+): tyrosine 45, glycine 47, and glycine 49. Histidine 65 is a catalytic residue. Residue aspartate 66 coordinates Ca(2+). N-linked (GlcNAc...) asparagine glycosylation occurs at asparagine 85. The active site involves aspartate 111. An N-linked (GlcNAc...) asparagine glycan is attached at asparagine 126.

It depends on Ca(2+) as a cofactor. Post-translationally, N-glycosylated. Glycosylated with mannose chains including Man2(GlcNAc), Man2(GlcNAc)2, Man2(GlcNAc)3, Man2(GlcNAc)4 and Man2(GlcNAc)5. In terms of tissue distribution, expressed by the skin glands (at protein level).

Its subcellular location is the secreted. The catalysed reaction is a 1,2-diacyl-sn-glycero-3-phosphocholine + H2O = a 1-acyl-sn-glycero-3-phosphocholine + a fatty acid + H(+). PLA2 catalyzes the calcium-dependent hydrolysis of the 2-acyl groups in 3-sn-phosphoglycerides. This chain is Phospholipase A2, found in Pithecopus azureus (Orange-legged monkey tree frog).